The sequence spans 531 residues: T-complex protein 1 subunit zeta-2 (531 aa).

Belongs to the TCP-1 chaperonin family. In terms of assembly, component of the chaperonin-containing T-complex (TRiC), a heterooligomeric complex of about 850 to 900 kDa that forms two stacked rings, 12 to 16 nm in diameter.

The protein localises to the cytoplasm. In terms of biological role, component of the chaperonin-containing T-complex (TRiC), a molecular chaperone complex that assists the folding of proteins upon ATP hydrolysis. This Bos taurus (Bovine) protein is T-complex protein 1 subunit zeta-2 (CCT6B).